Consider the following 304-residue polypeptide: CBY1-interacting BAR domain-containing protein 2 (304 aa).

A BAR-like region spans residues 6–217; it reads SRDSQVRVME…EKYDLERDLL (212 aa).

The protein belongs to the CIBAR family. Homodimer (via BAR-like domain). Heterodimer (via BAR-like domain) with FAM92A. Interacts with CBY1. In terms of tissue distribution, restricted to certain tissues, most prominently expressed in multicilaited tissues.

It is found in the cytoplasm. The protein localises to the cytoskeleton. It localises to the microtubule organizing center. Its subcellular location is the centrosome. The protein resides in the centriole. It is found in the cilium basal body. In terms of biological role, may play a role in ciliogenesis. In cooperation with CBY1 may facilitate ciliogenesis likely by the recruitment and fusion of endosomal vesicles at distal appendages during early stages of ciliogenesis. In Homo sapiens (Human), this protein is CBY1-interacting BAR domain-containing protein 2.